The following is a 100-amino-acid chain: uncharacterized protein (100 aa).

The protein to M.jannaschii MJ1155.1.

This is an uncharacterized protein from Archaeoglobus fulgidus (strain ATCC 49558 / DSM 4304 / JCM 9628 / NBRC 100126 / VC-16).